A 603-amino-acid polypeptide reads, in one-letter code: Methionine--tRNA ligase (603 aa).

A 'HIGH' region motif is present at residues P14 to H24. Zn(2+) is bound by residues C146, C149, C159, and C162. The 'KMSKS' region signature appears at K354 to S358. Position 357 (S357) interacts with ATP.

This sequence belongs to the class-I aminoacyl-tRNA synthetase family. MetG type 1 subfamily. In terms of assembly, monomer. Requires Zn(2+) as cofactor.

The protein localises to the cytoplasm. The catalysed reaction is tRNA(Met) + L-methionine + ATP = L-methionyl-tRNA(Met) + AMP + diphosphate. Its function is as follows. Is required not only for elongation of protein synthesis but also for the initiation of all mRNA translation through initiator tRNA(fMet) aminoacylation. The protein is Methionine--tRNA ligase of Salinispora tropica (strain ATCC BAA-916 / DSM 44818 / JCM 13857 / NBRC 105044 / CNB-440).